We begin with the raw amino-acid sequence, 119 residues long: Holo-[acyl-carrier-protein] synthase (119 aa).

Residues D8 and E58 each coordinate Mg(2+).

This sequence belongs to the P-Pant transferase superfamily. AcpS family. The cofactor is Mg(2+).

The protein resides in the cytoplasm. It catalyses the reaction apo-[ACP] + CoA = holo-[ACP] + adenosine 3',5'-bisphosphate + H(+). In terms of biological role, transfers the 4'-phosphopantetheine moiety from coenzyme A to a Ser of acyl-carrier-protein. The chain is Holo-[acyl-carrier-protein] synthase from Streptococcus thermophilus (strain CNRZ 1066).